Reading from the N-terminus, the 375-residue chain is NADH-ubiquinone oxidoreductase 40 kDa subunit, mitochondrial (375 aa).

The transit peptide at 1-26 directs the protein to the mitochondrion; it reads MAPLTAAMRSTPRIIVSNAFGFQRRA.

The protein belongs to the complex I NDUFA9 subunit family. In terms of assembly, complex I is composed of about 40 different subunits. The cofactor is FAD.

It localises to the mitochondrion matrix. Accessory subunit of the mitochondrial membrane respiratory chain NADH dehydrogenase (Complex I), that is believed not to be involved in catalysis. Complex I functions in the transfer of electrons from NADH to the respiratory chain. The immediate electron acceptor for the enzyme is believed to be ubiquinone. The polypeptide is NADH-ubiquinone oxidoreductase 40 kDa subunit, mitochondrial (nuo40) (Neurospora crassa (strain ATCC 24698 / 74-OR23-1A / CBS 708.71 / DSM 1257 / FGSC 987)).